A 309-amino-acid chain; its full sequence is UPF0252 protein PH0672 (309 aa).

The next 2 helical transmembrane spans lie at 5 to 25 (SVIIFIVIMLGIGCLNLNESI) and 106 to 126 (AVLTAGLLLASNISPVYLMIF).

The protein belongs to the UPF0252 family.

It localises to the cell membrane. This is UPF0252 protein PH0672 from Pyrococcus horikoshii (strain ATCC 700860 / DSM 12428 / JCM 9974 / NBRC 100139 / OT-3).